The chain runs to 284 residues: Shikimate dehydrogenase (NADP(+)) (284 aa).

Shikimate is bound by residues 20 to 22 (SIS) and Ser67. The active-site Proton acceptor is the Lys71. Residue Asp83 coordinates NADP(+). 2 residues coordinate shikimate: Asn92 and Asp107. NADP(+) contacts are provided by residues 129 to 133 (GAGGA) and Ile227. Tyr229 is a binding site for shikimate. Gly250 lines the NADP(+) pocket.

This sequence belongs to the shikimate dehydrogenase family. In terms of assembly, homodimer.

The catalysed reaction is shikimate + NADP(+) = 3-dehydroshikimate + NADPH + H(+). Its pathway is metabolic intermediate biosynthesis; chorismate biosynthesis; chorismate from D-erythrose 4-phosphate and phosphoenolpyruvate: step 4/7. Involved in the biosynthesis of the chorismate, which leads to the biosynthesis of aromatic amino acids. Catalyzes the reversible NADPH linked reduction of 3-dehydroshikimate (DHSA) to yield shikimate (SA). This is Shikimate dehydrogenase (NADP(+)) from Streptococcus pneumoniae (strain ATCC 700669 / Spain 23F-1).